A 108-amino-acid chain; its full sequence is Movement protein TGB2 (108 aa).

The Cytoplasmic portion of the chain corresponds to 1 to 14 (MPLTPPPDHSITYR). A helical membrane pass occupies residues 15–31 (ILAVGLCSCCAIYAATR). The Lumenal segment spans residues 32–67 (STLPHTGDNLHSLPYGGKYSDGTKSICYSGPGPTPD). The helical transmembrane segment at 68 to 85 (IPTHLPALLVLVLVVAIY) threads the bilayer. At 86-108 (ASSRLDFSVNYRCSCRVHNRSGQ) the chain is on the cytoplasmic side.

It belongs to the Tymovirales TGBp2 protein family.

It is found in the host endoplasmic reticulum membrane. Functionally, plays a role in viral cell-to-cell propagation, by facilitating genome transport to neighboring plant cells through plasmosdesmata,. This is Movement protein TGB2 from Strawberry mild yellow edge-associated virus (SMYEaV).